Here is a 40-residue protein sequence, read N- to C-terminus: Photosystem II reaction center protein J (40 aa).

The helical transmembrane segment at 8–28 (IPLWLIGTVTGILVIGLIGFF) threads the bilayer.

The protein belongs to the PsbJ family. As to quaternary structure, PSII is composed of 1 copy each of membrane proteins PsbA, PsbB, PsbC, PsbD, PsbE, PsbF, PsbH, PsbI, PsbJ, PsbK, PsbL, PsbM, PsbT, PsbX, PsbY, PsbZ, Psb30/Ycf12, at least 3 peripheral proteins of the oxygen-evolving complex and a large number of cofactors. It forms dimeric complexes.

The protein resides in the plastid. The protein localises to the chloroplast thylakoid membrane. In terms of biological role, one of the components of the core complex of photosystem II (PSII). PSII is a light-driven water:plastoquinone oxidoreductase that uses light energy to abstract electrons from H(2)O, generating O(2) and a proton gradient subsequently used for ATP formation. It consists of a core antenna complex that captures photons, and an electron transfer chain that converts photonic excitation into a charge separation. This is Photosystem II reaction center protein J from Zea mays (Maize).